The following is a 158-amino-acid chain: SsrA-binding protein (158 aa).

The disordered stretch occupies residues 132–158; the sequence is KKTHDKRETEKKRDWNREKARLMRDKG. Residues 136–158 show a composition bias toward basic and acidic residues; the sequence is DKRETEKKRDWNREKARLMRDKG.

It belongs to the SmpB family.

The protein localises to the cytoplasm. In terms of biological role, required for rescue of stalled ribosomes mediated by trans-translation. Binds to transfer-messenger RNA (tmRNA), required for stable association of tmRNA with ribosomes. tmRNA and SmpB together mimic tRNA shape, replacing the anticodon stem-loop with SmpB. tmRNA is encoded by the ssrA gene; the 2 termini fold to resemble tRNA(Ala) and it encodes a 'tag peptide', a short internal open reading frame. During trans-translation Ala-aminoacylated tmRNA acts like a tRNA, entering the A-site of stalled ribosomes, displacing the stalled mRNA. The ribosome then switches to translate the ORF on the tmRNA; the nascent peptide is terminated with the 'tag peptide' encoded by the tmRNA and targeted for degradation. The ribosome is freed to recommence translation, which seems to be the essential function of trans-translation. This Brucella anthropi (strain ATCC 49188 / DSM 6882 / CCUG 24695 / JCM 21032 / LMG 3331 / NBRC 15819 / NCTC 12168 / Alc 37) (Ochrobactrum anthropi) protein is SsrA-binding protein.